Reading from the N-terminus, the 429-residue chain is N5-carboxyaminoimidazole ribonucleotide synthase (429 aa).

Residues lysine 117, lysine 157, 194-197 (EERV), glutamate 202, and 280-281 (NE) each bind ATP. The ATP-grasp domain maps to 121–310 (RQRLAAAGVA…QFEQHLRAVL (190 aa)). The disordered stretch occupies residues 406–429 (RASDDAVGVPPACGGRSDEEERRL).

Belongs to the PurK/PurT family. Homodimer.

The enzyme catalyses 5-amino-1-(5-phospho-beta-D-ribosyl)imidazole + hydrogencarbonate + ATP = 5-carboxyamino-1-(5-phospho-D-ribosyl)imidazole + ADP + phosphate + 2 H(+). Its pathway is purine metabolism; IMP biosynthesis via de novo pathway; 5-amino-1-(5-phospho-D-ribosyl)imidazole-4-carboxylate from 5-amino-1-(5-phospho-D-ribosyl)imidazole (N5-CAIR route): step 1/2. Its function is as follows. Catalyzes the ATP-dependent conversion of 5-aminoimidazole ribonucleotide (AIR) and HCO(3)(-) to N5-carboxyaminoimidazole ribonucleotide (N5-CAIR). In Mycobacterium bovis (strain ATCC BAA-935 / AF2122/97), this protein is N5-carboxyaminoimidazole ribonucleotide synthase.